Here is a 317-residue protein sequence, read N- to C-terminus: Transaldolase (317 aa).

Residue K131 is the Schiff-base intermediate with substrate of the active site.

It belongs to the transaldolase family. Type 1 subfamily. In terms of assembly, homodimer.

It localises to the cytoplasm. The catalysed reaction is D-sedoheptulose 7-phosphate + D-glyceraldehyde 3-phosphate = D-erythrose 4-phosphate + beta-D-fructose 6-phosphate. Its pathway is carbohydrate degradation; pentose phosphate pathway; D-glyceraldehyde 3-phosphate and beta-D-fructose 6-phosphate from D-ribose 5-phosphate and D-xylulose 5-phosphate (non-oxidative stage): step 2/3. Its function is as follows. Transaldolase is important for the balance of metabolites in the pentose-phosphate pathway. This is Transaldolase from Baumannia cicadellinicola subsp. Homalodisca coagulata.